The primary structure comprises 102 residues: UPF0213 protein Ent638_3592 (102 aa).

The 76-residue stretch at 4-79 (VCWFLYLVRT…KQLTKRQKER (76 aa)) folds into the GIY-YIG domain.

It belongs to the UPF0213 family.

The sequence is that of UPF0213 protein Ent638_3592 from Enterobacter sp. (strain 638).